The sequence spans 203 residues: Holliday junction branch migration complex subunit RuvA (203 aa).

The interval 1 to 64 is domain I; it reads MIGRLRGIIL…EDAQLLYGFN (64 aa). The domain II stretch occupies residues 65–142; that stretch reads NKQERTLFKE…KGLHGDLFTP (78 aa). Positions 143-154 are flexible linker; it reads AADLVLTSPASP. A domain III region spans residues 155–203; the sequence is ATDDAEQEAVAALVALGYKPQEASRMVSKIARPDASSETLIREALRAAL.

This sequence belongs to the RuvA family. In terms of assembly, homotetramer. Forms an RuvA(8)-RuvB(12)-Holliday junction (HJ) complex. HJ DNA is sandwiched between 2 RuvA tetramers; dsDNA enters through RuvA and exits via RuvB. An RuvB hexamer assembles on each DNA strand where it exits the tetramer. Each RuvB hexamer is contacted by two RuvA subunits (via domain III) on 2 adjacent RuvB subunits; this complex drives branch migration. In the full resolvosome a probable DNA-RuvA(4)-RuvB(12)-RuvC(2) complex forms which resolves the HJ.

It is found in the cytoplasm. Functionally, the RuvA-RuvB-RuvC complex processes Holliday junction (HJ) DNA during genetic recombination and DNA repair, while the RuvA-RuvB complex plays an important role in the rescue of blocked DNA replication forks via replication fork reversal (RFR). RuvA specifically binds to HJ cruciform DNA, conferring on it an open structure. The RuvB hexamer acts as an ATP-dependent pump, pulling dsDNA into and through the RuvAB complex. HJ branch migration allows RuvC to scan DNA until it finds its consensus sequence, where it cleaves and resolves the cruciform DNA. In Citrobacter koseri (strain ATCC BAA-895 / CDC 4225-83 / SGSC4696), this protein is Holliday junction branch migration complex subunit RuvA.